The following is a 100-amino-acid chain: uncharacterized protein (100 aa).

This is an uncharacterized protein from Archaeoglobus fulgidus (strain ATCC 49558 / DSM 4304 / JCM 9628 / NBRC 100126 / VC-16).